A 466-amino-acid chain; its full sequence is Fumarate hydratase class II (466 aa).

Substrate-binding positions include 99-101 (SGT), 129-132 (HPND), 139-141 (SSN), and Thr-187. The active-site Proton donor/acceptor is the His-188. Ser-318 is a catalytic residue. Residues Ser-319 and 324-326 (KVN) each bind substrate.

It belongs to the class-II fumarase/aspartase family. Fumarase subfamily. As to quaternary structure, homotetramer.

The protein resides in the cytoplasm. The catalysed reaction is (S)-malate = fumarate + H2O. It functions in the pathway carbohydrate metabolism; tricarboxylic acid cycle; (S)-malate from fumarate: step 1/1. Functionally, involved in the TCA cycle. Catalyzes the stereospecific interconversion of fumarate to L-malate. The polypeptide is Fumarate hydratase class II (Thermus aquaticus).